Here is a 701-residue protein sequence, read N- to C-terminus: Acetyl-coenzyme A synthetase, cytoplasmic (701 aa).

The disordered stretch occupies residues 1–41 (MGLPEERVRSGSGSRGQEEAGAGGRARSWSPPPEVSRSAHV). Residues 1 to 107 (MGLPEERVRS…GATTNICYNV (107 aa)) are interaction with TFEB. A phosphoserine mark is found at Ser-28, Ser-30, and Ser-36. 219–222 (RGEK) provides a ligand contact to CoA. A phosphoserine mark is found at Ser-263, Ser-265, and Ser-267. Thr-363 contacts CoA. Lys-418 is modified (N6-acetyllysine). ATP-binding positions include 439 to 441 (GEP), 463 to 468 (DTFWQT), Asp-552, and Arg-567. CoA is bound by residues Ser-575 and Arg-636. The Nuclear localization signal signature appears at 656–668 (KTRSGKIMRRVLR). Ser-659 is modified (phosphoserine; by AMPK). Lys-661 bears the N6-acetyllysine mark.

Belongs to the ATP-dependent AMP-binding enzyme family. In terms of assembly, monomer. Interacts with TFEB. AMPK-mediated phosphorylated form at Ser-659 interacts with KPNA1; this interaction results in nuclear translocation of ACSS2. Interacts with the 'Thr-172' phosphorylated form of PRKAA2. Interacts with CREBBP. In terms of processing, reversibly acetylated at Lys-661. The acetyl-CoA synthase activity is inhibited by acetylation and activated by deacetylation mediated by the deacetylases SIRT1 and SIRT3. Post-translationally, glucose deprivation results in its AMPK-dependent phosphorylation at Ser-659, which leads to exposure of its nuclear localization signal, required for its interaction with KPNA1 and subsequent translocation to the nucleus.

The protein resides in the cytoplasm. It is found in the cytosol. Its subcellular location is the nucleus. The enzyme catalyses acetate + ATP + CoA = acetyl-CoA + AMP + diphosphate. It catalyses the reaction propanoate + ATP + CoA = propanoyl-CoA + AMP + diphosphate. With respect to regulation, inhibited by acetylation at Lys-661 and activated by deacetylation mediated by the deacetylases SIRT1 and SIRT3. Functionally, catalyzes the synthesis of acetyl-CoA from short-chain fatty acids. Acetate is the preferred substrate. Can also utilize propionate with a much lower affinity. Nuclear ACSS2 promotes glucose deprivation-induced lysosomal biogenesis and autophagy, tumor cell survival and brain tumorigenesis. Glucose deprivation results in AMPK-mediated phosphorylation of ACSS2 leading to its translocation to the nucleus where it binds to TFEB and locally produces acetyl-CoA for histone acetylation in the promoter regions of TFEB target genes thereby activating their transcription. The regulation of genes associated with autophagy and lysosomal activity through ACSS2 is important for brain tumorigenesis and tumor survival. Acts as a chromatin-bound transcriptional coactivator that up-regulates histone acetylation and expression of neuronal genes. Can be recruited to the loci of memory-related neuronal genes to maintain a local acetyl-CoA pool, providing the substrate for histone acetylation and promoting the expression of specific genes, which is essential for maintaining long-term spatial memory. The chain is Acetyl-coenzyme A synthetase, cytoplasmic (ACSS2) from Homo sapiens (Human).